Consider the following 166-residue polypeptide: Ribosome maturation factor RimM (166 aa).

The PRC barrel domain occupies 94-166; it reads EGEYYHADLI…IVIEAAYADQ (73 aa).

It belongs to the RimM family. As to quaternary structure, binds ribosomal protein uS19.

It is found in the cytoplasm. Functionally, an accessory protein needed during the final step in the assembly of 30S ribosomal subunit, possibly for assembly of the head region. Essential for efficient processing of 16S rRNA. May be needed both before and after RbfA during the maturation of 16S rRNA. It has affinity for free ribosomal 30S subunits but not for 70S ribosomes. The protein is Ribosome maturation factor RimM of Novosphingobium aromaticivorans (strain ATCC 700278 / DSM 12444 / CCUG 56034 / CIP 105152 / NBRC 16084 / F199).